A 417-amino-acid chain; its full sequence is Serine hydroxymethyltransferase 2 (417 aa).

(6S)-5,6,7,8-tetrahydrofolate is bound by residues leucine 121 and 125–127; that span reads GHL. Lysine 229 is subject to N6-(pyridoxal phosphate)lysine. 354–356 serves as a coordination point for (6S)-5,6,7,8-tetrahydrofolate; it reads SPF.

It belongs to the SHMT family. In terms of assembly, homodimer. It depends on pyridoxal 5'-phosphate as a cofactor.

It is found in the cytoplasm. It carries out the reaction (6R)-5,10-methylene-5,6,7,8-tetrahydrofolate + glycine + H2O = (6S)-5,6,7,8-tetrahydrofolate + L-serine. It functions in the pathway one-carbon metabolism; tetrahydrofolate interconversion. It participates in amino-acid biosynthesis; glycine biosynthesis; glycine from L-serine: step 1/1. In terms of biological role, catalyzes the reversible interconversion of serine and glycine with tetrahydrofolate (THF) serving as the one-carbon carrier. This reaction serves as the major source of one-carbon groups required for the biosynthesis of purines, thymidylate, methionine, and other important biomolecules. Also exhibits THF-independent aldolase activity toward beta-hydroxyamino acids, producing glycine and aldehydes, via a retro-aldol mechanism. The sequence is that of Serine hydroxymethyltransferase 2 from Pseudomonas fluorescens (strain Pf0-1).